The primary structure comprises 142 residues: Large ribosomal subunit protein uL11 (142 aa).

Belongs to the universal ribosomal protein uL11 family. In terms of assembly, part of the ribosomal stalk of the 50S ribosomal subunit. Interacts with L10 and the large rRNA to form the base of the stalk. L10 forms an elongated spine to which L12 dimers bind in a sequential fashion forming a multimeric L10(L12)X complex. Post-translationally, one or more lysine residues are methylated.

In terms of biological role, forms part of the ribosomal stalk which helps the ribosome interact with GTP-bound translation factors. This chain is Large ribosomal subunit protein uL11, found in Rhizobium meliloti (strain 1021) (Ensifer meliloti).